The following is a 162-amino-acid chain: Protein A49 (162 aa).

The protein belongs to the poxviridae A49 protein family.

The protein is Protein A49 of Homo sapiens (Human).